The sequence spans 249 residues: Acetylglutamate kinase (249 aa).

Residues 36-37, Arg-58, and Asn-147 each bind substrate; that span reads GG.

The protein belongs to the acetylglutamate kinase family. ArgB subfamily.

It is found in the cytoplasm. It catalyses the reaction N-acetyl-L-glutamate + ATP = N-acetyl-L-glutamyl 5-phosphate + ADP. It participates in amino-acid biosynthesis; L-arginine biosynthesis; N(2)-acetyl-L-ornithine from L-glutamate: step 2/4. In terms of biological role, catalyzes the ATP-dependent phosphorylation of N-acetyl-L-glutamate. The protein is Acetylglutamate kinase of Thermus thermophilus (strain ATCC 27634 / DSM 579 / HB8).